The following is a 232-amino-acid chain: Lipoprotein-releasing system ATP-binding protein LolD (232 aa).

An ABC transporter domain is found at 11-231; that stretch reads VYLHDIRRQY…SLENGHVVEL (221 aa). 47–54 contributes to the ATP binding site; it reads APSGSGKS.

The protein belongs to the ABC transporter superfamily. Lipoprotein translocase (TC 3.A.1.125) family. The complex is composed of two ATP-binding proteins (LolD) and two transmembrane proteins (LolC and LolE).

The protein resides in the cell inner membrane. In terms of biological role, part of the ABC transporter complex LolCDE involved in the translocation of mature outer membrane-directed lipoproteins, from the inner membrane to the periplasmic chaperone, LolA. Responsible for the formation of the LolA-lipoprotein complex in an ATP-dependent manner. The sequence is that of Lipoprotein-releasing system ATP-binding protein LolD from Nitrobacter hamburgensis (strain DSM 10229 / NCIMB 13809 / X14).